We begin with the raw amino-acid sequence, 608 residues long: Protoheme IX farnesyltransferase (608 aa).

The COX15/CtaA stretch occupies residues 1 to 338 (MKTPAWSRLA…DYLALTKPRV (338 aa)). The next 17 membrane-spanning stretches (helical) occupy residues 10–30 (AGYA…GAYV), 67–87 (ATSG…LRAF), 99–119 (LALF…LFGW), 139–159 (TYFL…GGPL), 167–187 (VGLA…SGAV), 220–240 (VLHP…GYLV), 252–272 (LAQG…INVA), 277–297 (VWMQ…FVFL), 338–357 (VISL…AKGW), 362–384 (VFLA…NMVV), 411–431 (LLFA…GANL), 432–452 (LAAT…TLYL), 460–480 (IVIG…AVTG), 488–508 (YLFA…ALMI), 530–550 (VIQI…PLLL), 555–575 (LLYL…SLAL), and 584–604 (AVSL…AMAV). The segment at 339-608 (ISLLLFTALF…FAAMAVDRAV (270 aa)) is protoheme IX prenyltransferase.

This sequence in the N-terminal section; belongs to the COX15/CtaA family. In the C-terminal section; belongs to the UbiA prenyltransferase family. Protoheme IX farnesyltransferase subfamily.

It is found in the cell inner membrane. It catalyses the reaction heme b + (2E,6E)-farnesyl diphosphate + H2O = Fe(II)-heme o + diphosphate. It participates in porphyrin-containing compound metabolism; heme O biosynthesis; heme O from protoheme: step 1/1. In terms of biological role, converts heme B (protoheme IX) to heme O by substitution of the vinyl group on carbon 2 of heme B porphyrin ring with a hydroxyethyl farnesyl side group. This is Protoheme IX farnesyltransferase (ctaB) from Thermus thermophilus (strain ATCC 27634 / DSM 579 / HB8).